We begin with the raw amino-acid sequence, 121 residues long: Large ribosomal subunit protein uL14c (121 aa).

The protein belongs to the universal ribosomal protein uL14 family. In terms of assembly, part of the 50S ribosomal subunit.

It is found in the plastid. It localises to the apicoplast. Binds to 23S rRNA. The protein is Large ribosomal subunit protein uL14c (rpl14) of Eimeria tenella (Coccidian parasite).